Consider the following 363-residue polypeptide: Protein-glutamate methylesterase/protein-glutamine glutaminase of group 3 operon (363 aa).

The region spanning 7–124 (RVLIVDDSAS…RQALLECSTR (118 aa)) is the Response regulatory domain. At Asp-58 the chain carries 4-aspartylphosphate. The region spanning 166–357 (PTTERIVCIG…REIMLWYQAG (192 aa)) is the CheB-type methylesterase domain. Residues Ser-177, His-203, and Asp-299 contribute to the active site.

It belongs to the CheB family. Phosphorylated by CheA. Phosphorylation of the N-terminal regulatory domain activates the methylesterase activity.

Its subcellular location is the cytoplasm. The enzyme catalyses [protein]-L-glutamate 5-O-methyl ester + H2O = L-glutamyl-[protein] + methanol + H(+). The catalysed reaction is L-glutaminyl-[protein] + H2O = L-glutamyl-[protein] + NH4(+). Functionally, involved in chemotaxis. Part of a chemotaxis signal transduction system that modulates chemotaxis in response to various stimuli. Catalyzes the demethylation of specific methylglutamate residues introduced into the chemoreceptors (methyl-accepting chemotaxis proteins or MCP) by CheR. Also mediates the irreversible deamidation of specific glutamine residues to glutamic acid. The sequence is that of Protein-glutamate methylesterase/protein-glutamine glutaminase of group 3 operon from Bradyrhizobium diazoefficiens (strain JCM 10833 / BCRC 13528 / IAM 13628 / NBRC 14792 / USDA 110).